The primary structure comprises 138 residues: Large ribosomal subunit protein uL16 (138 aa).

Residues 1–14 (MLQPKRTKYRRTHR) show a composition bias toward basic residues. The interval 1-24 (MLQPKRTKYRRTHRLQHDKGEAHT) is disordered. A compositionally biased stretch (basic and acidic residues) spans 15–24 (LQHDKGEAHT).

The protein belongs to the universal ribosomal protein uL16 family. Part of the 50S ribosomal subunit.

Its function is as follows. Binds 23S rRNA and is also seen to make contacts with the A and possibly P site tRNAs. The protein is Large ribosomal subunit protein uL16 of Mycoplasma mobile (strain ATCC 43663 / 163K / NCTC 11711) (Mesomycoplasma mobile).